The primary structure comprises 190 residues: Protein OPG209 (190 aa).

Belongs to the orthopoxvirus OPG209 protein family.

The sequence is that of Protein OPG209 (OPG209) from Bos taurus (Bovine).